The primary structure comprises 2262 residues: Klarsicht protein (2262 aa).

Disordered regions lie at residues 1–140, 345–410, 442–475, 514–561, 800–832, 859–898, 1000–1031, 1115–1157, 1246–1316, and 1533–1670; these read MEMQ…VGND, QQQQ…GEGN, AANGLDDDEDEEEDTEDDSFGYEGEATEDDLNEV, QSQS…PDIG, ATSSVDGLQSTAVSSTTATGGPLPPSDDSDKEN, SNYDSSSACSSSNSNSNSNSNSNGRLTETSATSRVTQLQM, HLPPRSPAKSAKSTKSQASNATVSGSTLVSPV, PSCK…SEGF, SGLA…ELGG, and VRRK…QQSR. The segment at 1 to 1774 is required for apical microtubules localization; sequence MEMQQENETG…KPTPELLDTE (1774 aa). Residues 1–2215 are Cytoplasmic-facing; the sequence is MEMQQENETG…KRGWAWRIAR (2215 aa). Residues 58–67 are compositionally biased toward basic and acidic residues; that stretch reads KIEHTTKPLK. Residues 131–140 show a composition bias toward polar residues; sequence NYGTNSVGND. Residues 345–402 show a composition bias toward low complexity; the sequence is QQQQLSSQQPASLTSNCSSESTSESATKSSSLSSGFASDPVTTPIGTAAAAPPSSSTH. Positions 446–475 are enriched in acidic residues; it reads LDDDEDEEEDTEDDSFGYEGEATEDDLNEV. Residues 514–525 are compositionally biased toward low complexity; that stretch reads QSQSRSQQVPSQ. The segment covering 546–560 has biased composition (acidic residues); it reads EADEELEEEDEDPDI. 2 stretches are compositionally biased toward low complexity: residues 809 to 818 and 859 to 881; these read STAVSSTTAT and SNYDSSSACSSSNSNSNSNSNSN. Residues 882–894 are compositionally biased toward polar residues; sequence GRLTETSATSRVT. Residues 1006–1018 show a composition bias toward low complexity; it reads PAKSAKSTKSQAS. The span at 1019–1028 shows a compositional bias: polar residues; that stretch reads NATVSGSTLV. Polar residues predominate over residues 1246–1259; the sequence is SGLASHSISESALD. Residues 1267–1280 are compositionally biased toward low complexity; it reads PRAASSSGTGSNAA. Over residues 1288-1299 the composition is skewed to basic residues; the sequence is SLRRRKARKKRI. Residues 1550–1559 are compositionally biased toward low complexity; it reads QSDQQQQQLQ. The span at 1560–1583 shows a compositional bias: polar residues; that stretch reads VTPSLSASATALMTTPKNQSTSHQ. 2 stretches are compositionally biased toward basic and acidic residues: residues 1586–1596 and 1610–1640; these read HRAESVGRKLD and RTSESDTSTRRRRTVTADERRRSSRNLEKCI. Positions 1809 to 1842 form a coiled coil; it reads LTKQERRLQSALEEQEQQQESEQLKQQKLVEEEK. The tract at residues 2092 to 2205 is disordered; it reads HQQKQQIQQN…GEGADPAQTS (114 aa). Positions 2093 to 2105 are enriched in low complexity; sequence QQKQQIQQNQTQQ. The segment covering 2130 to 2142 has biased composition (basic residues); the sequence is RRGKGARKARQAK. One can recognise a KASH domain in the interval 2207 to 2262; sequence RGWAWRIARAAVPMQVALFTIFCAACLMQPNCCDNLNNLSMSFTPQLRYIRGPPPI. Residues 2216–2236 traverse the membrane as a helical; Anchor for type IV membrane protein segment; sequence AAVPMQVALFTIFCAACLMQP. The Perinuclear space segment spans residues 2237 to 2262; the sequence is NCCDNLNNLSMSFTPQLRYIRGPPPI.

The protein belongs to the nesprin family. As to quaternary structure, core component of LINC complexes which are composed of inner nuclear membrane SUN domain-containing proteins coupled to outer nuclear membrane KASH domain-containing nesprins. Interacts with kud. Interacts with Msp300; this interaction allows the anchoring of Msp300 nuclear ring structure to the nuclear envelope. Expressed ubiquitously in the eye disk, but at much higher levels posterior to the morphogenetic furrow. Expressed in R-cells and also in non-neural cone cells.

The protein localises to the cytoplasm. The protein resides in the cytoskeleton. It localises to the microtubule organizing center. It is found in the perinuclear region. Its subcellular location is the nucleus membrane. The protein localises to the nucleus envelope. In terms of biological role, component of the LINC (LInker of Nucleoskeleton and Cytoskeleton) complex involved in the connection between the nuclear lamina and the cytoskeleton. Plays a role in the nuclear positioning and links the nucleus to the microtubule organizing center (MTOC). Collaborates with Klar to promote even spacing of the myonuclei at the periphery of striated muscle fibers by mediating a tight association between a nuclear ring structure of Msp300 and the plus ends of a unique astral microtubule (MT) network. This Drosophila melanogaster (Fruit fly) protein is Klarsicht protein.